The following is a 448-amino-acid chain: Exodeoxyribonuclease 7 large subunit (448 aa).

The protein belongs to the XseA family. In terms of assembly, heterooligomer composed of large and small subunits.

Its subcellular location is the cytoplasm. The catalysed reaction is Exonucleolytic cleavage in either 5'- to 3'- or 3'- to 5'-direction to yield nucleoside 5'-phosphates.. Its function is as follows. Bidirectionally degrades single-stranded DNA into large acid-insoluble oligonucleotides, which are then degraded further into small acid-soluble oligonucleotides. This is Exodeoxyribonuclease 7 large subunit from Shewanella baltica (strain OS185).